Here is a 616-residue protein sequence, read N- to C-terminus: Proline--tRNA ligase (616 aa).

Belongs to the class-II aminoacyl-tRNA synthetase family. ProS type 1 subfamily. As to quaternary structure, homodimer.

Its subcellular location is the cytoplasm. It catalyses the reaction tRNA(Pro) + L-proline + ATP = L-prolyl-tRNA(Pro) + AMP + diphosphate. Catalyzes the attachment of proline to tRNA(Pro) in a two-step reaction: proline is first activated by ATP to form Pro-AMP and then transferred to the acceptor end of tRNA(Pro). As ProRS can inadvertently accommodate and process non-cognate amino acids such as alanine and cysteine, to avoid such errors it has two additional distinct editing activities against alanine. One activity is designated as 'pretransfer' editing and involves the tRNA(Pro)-independent hydrolysis of activated Ala-AMP. The other activity is designated 'posttransfer' editing and involves deacylation of mischarged Ala-tRNA(Pro). The misacylated Cys-tRNA(Pro) is not edited by ProRS. The chain is Proline--tRNA ligase from Streptococcus sanguinis (strain SK36).